The sequence spans 116 residues: Large ribosomal subunit protein uL18 (116 aa).

The protein belongs to the universal ribosomal protein uL18 family. In terms of assembly, part of the 50S ribosomal subunit; part of the 5S rRNA/L5/L18/L25 subcomplex. Contacts the 5S and 23S rRNAs.

This is one of the proteins that bind and probably mediate the attachment of the 5S RNA into the large ribosomal subunit, where it forms part of the central protuberance. In Marinomonas sp. (strain MWYL1), this protein is Large ribosomal subunit protein uL18.